Consider the following 429-residue polypeptide: ATP-sensitive inward rectifier potassium channel 12 (429 aa).

The Cytoplasmic portion of the chain corresponds to 1–76 (MTAGRVNPYS…IADMFTTCVD (76 aa)). The helical transmembrane segment at 77 to 103 (IRWRYMLLLFSLAFLVSWLLFGLIFWL) threads the bilayer. Residues Arg-78 and Arg-80 each coordinate a 1,2-diacyl-sn-glycero-3-phospho-(1D-myo-inositol-4,5-bisphosphate). The Extracellular portion of the chain corresponds to 104 to 129 (IALIHGDLENPGGDDTFKPCVLQVNG). Residues Cys-123 and Cys-155 are joined by a disulfide bond. The helical; Pore-forming intramembrane region spans 130 to 146 (FVAAFLFSIETQTTIGY). 4 residues coordinate K(+): Thr-143, Ile-144, Gly-145, and Tyr-146. The Selectivity filter motif lies at 143–148 (TIGYGF). The Extracellular segment spans residues 147-155 (GFRCVTEEC). A helical transmembrane segment spans residues 156-183 (PLAVFMVVVQSIVGCIIDSFMIGAIMAK). 2 residues coordinate a 1,2-diacyl-sn-glycero-3-phospho-(1D-myo-inositol-4,5-bisphosphate): Lys-183 and Lys-188. At 184 to 429 (MARPKKRAQT…QRSYRRESEI (246 aa)) the chain is on the cytoplasmic side. The disordered stretch occupies residues 386-407 (RDEDEEDDDSRGLDDLSPDNRH). The span at 395-407 (SRGLDDLSPDNRH) shows a compositional bias: basic and acidic residues.

It belongs to the inward rectifier-type potassium channel family. As to quaternary structure, homotetramer.

It localises to the membrane. The protein localises to the cell membrane. It is found in the sarcolemma. Its subcellular location is the T-tubule. The catalysed reaction is K(+)(in) = K(+)(out). With respect to regulation, activated by phosphatidylinositol 4,5-bisphosphate (PtdIns(4,5)P2). PtdIns(4,5)P2 binding to the cytoplasmic side of the channel triggers a conformation change leading to channel opening. In terms of biological role, inward rectifying potassium channel that probably participates in controlling the resting membrane potential in electrically excitable cells. Probably participates in establishing action potential waveform and excitability of neuronal and muscle tissues. Inward rectifier potassium channels are characterized by a greater tendency to allow potassium to flow into the cell rather than out of it. Their voltage dependence is regulated by the concentration of extracellular potassium; as external potassium is raised, the voltage range of the channel opening shifts to more positive voltages. The inward rectification is mainly due to the blockage of outward current by internal magnesium. This Gallus gallus (Chicken) protein is ATP-sensitive inward rectifier potassium channel 12 (KCNJ12).